A 199-amino-acid polypeptide reads, in one-letter code: Peptidyl-tRNA hydrolase (199 aa).

A tRNA-binding site is contributed by tyrosine 18. The Proton acceptor role is filled by histidine 23. 3 residues coordinate tRNA: tyrosine 72, asparagine 74, and asparagine 120.

It belongs to the PTH family. In terms of assembly, monomer.

The protein resides in the cytoplasm. The catalysed reaction is an N-acyl-L-alpha-aminoacyl-tRNA + H2O = an N-acyl-L-amino acid + a tRNA + H(+). Functionally, hydrolyzes ribosome-free peptidyl-tRNAs (with 1 or more amino acids incorporated), which drop off the ribosome during protein synthesis, or as a result of ribosome stalling. Its function is as follows. Catalyzes the release of premature peptidyl moieties from peptidyl-tRNA molecules trapped in stalled 50S ribosomal subunits, and thus maintains levels of free tRNAs and 50S ribosomes. This chain is Peptidyl-tRNA hydrolase, found in Bifidobacterium adolescentis (strain ATCC 15703 / DSM 20083 / NCTC 11814 / E194a).